The primary structure comprises 217 residues: Oxygen-evolving enhancer protein 3, chloroplastic (217 aa).

Disordered stretches follow at residues 1-25 and 73-95; these read MAQAMASMTGLSQGVQLPAGPRRAG and PIKLGPPPPPSGGLPGTLNSDQA. The N-terminal 63 residues, 1-63, are a transit peptide targeting the chloroplast; it reads MAQAMASMTG…ATGIAGGALA (63 aa).

The protein belongs to the PsbQ family.

The protein localises to the plastid. It is found in the chloroplast thylakoid membrane. This is Oxygen-evolving enhancer protein 3, chloroplastic from Oryza sativa subsp. indica (Rice).